Reading from the N-terminus, the 312-residue chain is Homoserine kinase (312 aa).

Residue 91–101 (PVASGLGSSAC) participates in ATP binding.

The protein belongs to the GHMP kinase family. Homoserine kinase subfamily.

It is found in the cytoplasm. The enzyme catalyses L-homoserine + ATP = O-phospho-L-homoserine + ADP + H(+). It participates in amino-acid biosynthesis; L-threonine biosynthesis; L-threonine from L-aspartate: step 4/5. In terms of biological role, catalyzes the ATP-dependent phosphorylation of L-homoserine to L-homoserine phosphate. This chain is Homoserine kinase, found in Blochmanniella pennsylvanica (strain BPEN).